A 490-amino-acid polypeptide reads, in one-letter code: Protein U94 (490 aa).

The PV NS1-Nuc domain maps to 1–210; sequence MFSIINPSDD…SHFNKKPNVK (210 aa).

The protein localises to the host nucleus. This chain is Protein U94 (U94), found in Human herpesvirus 6A (strain Uganda-1102) (HHV-6 variant A).